Consider the following 225-residue polypeptide: NAD(P)H-quinone oxidoreductase subunit K, chloroplastic (225 aa).

Residues Cys43, Cys44, Cys108, and Cys139 each contribute to the [4Fe-4S] cluster site.

This sequence belongs to the complex I 20 kDa subunit family. In terms of assembly, NDH is composed of at least 16 different subunits, 5 of which are encoded in the nucleus. The cofactor is [4Fe-4S] cluster.

Its subcellular location is the plastid. The protein resides in the chloroplast thylakoid membrane. It catalyses the reaction a plastoquinone + NADH + (n+1) H(+)(in) = a plastoquinol + NAD(+) + n H(+)(out). The enzyme catalyses a plastoquinone + NADPH + (n+1) H(+)(in) = a plastoquinol + NADP(+) + n H(+)(out). Its function is as follows. NDH shuttles electrons from NAD(P)H:plastoquinone, via FMN and iron-sulfur (Fe-S) centers, to quinones in the photosynthetic chain and possibly in a chloroplast respiratory chain. The immediate electron acceptor for the enzyme in this species is believed to be plastoquinone. Couples the redox reaction to proton translocation, and thus conserves the redox energy in a proton gradient. This is NAD(P)H-quinone oxidoreductase subunit K, chloroplastic from Platanus occidentalis (Sycamore).